Consider the following 664-residue polypeptide: DNA ligase (664 aa).

Residues 30–34, 79–80, and Glu109 each bind NAD(+); these read DFEFD and SL. Lys111 (N6-AMP-lysine intermediate) is an active-site residue. The NAD(+) site is built by Arg132, Glu169, Lys284, and Lys308. The Zn(2+) site is built by Cys403, Cys406, Cys421, and Cys427. Positions 586–664 constitute a BRCT domain; sequence NRSEKLKGLT…NEDAFLNMLE (79 aa).

This sequence belongs to the NAD-dependent DNA ligase family. LigA subfamily. Mg(2+) is required as a cofactor. The cofactor is Mn(2+).

It carries out the reaction NAD(+) + (deoxyribonucleotide)n-3'-hydroxyl + 5'-phospho-(deoxyribonucleotide)m = (deoxyribonucleotide)n+m + AMP + beta-nicotinamide D-nucleotide.. In terms of biological role, DNA ligase that catalyzes the formation of phosphodiester linkages between 5'-phosphoryl and 3'-hydroxyl groups in double-stranded DNA using NAD as a coenzyme and as the energy source for the reaction. It is essential for DNA replication and repair of damaged DNA. The sequence is that of DNA ligase from Parabacteroides distasonis (strain ATCC 8503 / DSM 20701 / CIP 104284 / JCM 5825 / NCTC 11152).